We begin with the raw amino-acid sequence, 317 residues long: Transcription factor EC (317 aa).

Positions Met-1–Leu-44 are disordered. Residues Met-1–Ser-90 are necessary for transcriptional transactivation. The segment covering Glu-34–Pro-43 has biased composition (polar residues). A bHLH domain is found at Gln-110 to Leu-163. The necessary for transcriptional transactivation stretch occupies residues Thr-241–Leu-317. Positions Pro-297–Leu-317 are disordered.

It belongs to the MiT/TFE family. In terms of assembly, homodimer. Forms heterodimers with MITF and TFE3. Interacts with MITF.

Its subcellular location is the nucleus. Its function is as follows. Transcriptional regulator that acts as a repressor or an activator. Acts as a transcriptional repressor on minimal promoter containing element F (that includes an E-box sequence). Binds to element F in an E-box sequence-specific manner. Acts as a transcriptional transactivator on the proximal promoter region of the tartrate-resistant acid phosphatase (TRAP) E-box containing promoter. Collaborates with MITF in target gene activation. Acts as a transcriptional repressor on minimal promoter containing mu E3 enhancer sequence. Binds to mu E3 DNA sequence of the immunoglobulin heavy-chain gene enhancer. Binds DNA in a homo- or heterodimeric form. The protein is Transcription factor EC (TFEC) of Bos taurus (Bovine).